The following is a 122-amino-acid chain: Small ribosomal subunit protein uS12 (122 aa).

Belongs to the universal ribosomal protein uS12 family. In terms of assembly, part of the 30S ribosomal subunit. Contacts proteins S8 and S17. May interact with IF1 in the 30S initiation complex.

Its function is as follows. With S4 and S5 plays an important role in translational accuracy. Functionally, interacts with and stabilizes bases of the 16S rRNA that are involved in tRNA selection in the A site and with the mRNA backbone. Located at the interface of the 30S and 50S subunits, it traverses the body of the 30S subunit contacting proteins on the other side and probably holding the rRNA structure together. The combined cluster of proteins S8, S12 and S17 appears to hold together the shoulder and platform of the 30S subunit. This Corynebacterium efficiens (strain DSM 44549 / YS-314 / AJ 12310 / JCM 11189 / NBRC 100395) protein is Small ribosomal subunit protein uS12.